The chain runs to 156 residues: Succinate dehydrogenase assembly factor 2-B, mitochondrial (156 aa).

Residues 1 to 24 constitute a mitochondrion transit peptide; sequence MLRQFIVSTVGRRLQLPMMAQSRL.

The protein belongs to the SDHAF2 family. Interacts with the flavoprotein subunit within the SDH catalytic dimer.

It is found in the mitochondrion matrix. Plays an essential role in the assembly of succinate dehydrogenase (SDH), an enzyme complex (also referred to as respiratory complex II) that is a component of both the tricarboxylic acid (TCA) cycle and the mitochondrial electron transport chain, and which couples the oxidation of succinate to fumarate with the reduction of ubiquinone (coenzyme Q) to ubiquinol. Required for flavinylation (covalent attachment of FAD) of the flavoprotein subunit of the SDH catalytic dimer. The polypeptide is Succinate dehydrogenase assembly factor 2-B, mitochondrial (Drosophila simulans (Fruit fly)).